Reading from the N-terminus, the 148-residue chain is UPF0260 protein KPK_1978 (148 aa).

It belongs to the UPF0260 family.

The chain is UPF0260 protein KPK_1978 from Klebsiella pneumoniae (strain 342).